The chain runs to 238 residues: Ribonuclease PH (238 aa).

The segment at 67-87 (PRSTHTRSDREAARGKQSGRT) is disordered. Residues arginine 86 and 124–126 (GTR) each bind phosphate.

The protein belongs to the RNase PH family. In terms of assembly, homohexameric ring arranged as a trimer of dimers.

The enzyme catalyses tRNA(n+1) + phosphate = tRNA(n) + a ribonucleoside 5'-diphosphate. Its function is as follows. Phosphorolytic 3'-5' exoribonuclease that plays an important role in tRNA 3'-end maturation. Removes nucleotide residues following the 3'-CCA terminus of tRNAs; can also add nucleotides to the ends of RNA molecules by using nucleoside diphosphates as substrates, but this may not be physiologically important. Probably plays a role in initiation of 16S rRNA degradation (leading to ribosome degradation) during starvation. In Ralstonia nicotianae (strain ATCC BAA-1114 / GMI1000) (Ralstonia solanacearum), this protein is Ribonuclease PH.